Reading from the N-terminus, the 73-residue chain is Large ribosomal subunit protein bL31 (73 aa).

Belongs to the bacterial ribosomal protein bL31 family. Type A subfamily. As to quaternary structure, part of the 50S ribosomal subunit.

Binds the 23S rRNA. The chain is Large ribosomal subunit protein bL31 from Synechococcus sp. (strain JA-3-3Ab) (Cyanobacteria bacterium Yellowstone A-Prime).